Reading from the N-terminus, the 333-residue chain is Beta-ketoacyl-[acyl-carrier-protein] synthase III (333 aa).

Residues C116 and H258 contribute to the active site. Residues 259 to 263 (QANQR) are ACP-binding. The active site involves N288.

Belongs to the thiolase-like superfamily. FabH family. Homodimer.

The protein resides in the cytoplasm. The catalysed reaction is malonyl-[ACP] + acetyl-CoA + H(+) = 3-oxobutanoyl-[ACP] + CO2 + CoA. The protein operates within lipid metabolism; fatty acid biosynthesis. In terms of biological role, catalyzes the condensation reaction of fatty acid synthesis by the addition to an acyl acceptor of two carbons from malonyl-ACP. Catalyzes the first condensation reaction which initiates fatty acid synthesis and may therefore play a role in governing the total rate of fatty acid production. Possesses both acetoacetyl-ACP synthase and acetyl transacylase activities. Its substrate specificity determines the biosynthesis of branched-chain and/or straight-chain of fatty acids. The chain is Beta-ketoacyl-[acyl-carrier-protein] synthase III from Microcystis aeruginosa (strain NIES-843 / IAM M-2473).